The sequence spans 143 residues: Transcriptional regulator MraZ (143 aa).

SpoVT-AbrB domains lie at 5 to 47 and 76 to 119; these read EYEH…TLEE and AVEV…DRAS.

The protein belongs to the MraZ family. As to quaternary structure, forms oligomers.

The protein resides in the cytoplasm. Its subcellular location is the nucleoid. The chain is Transcriptional regulator MraZ from Staphylococcus carnosus (strain TM300).